The primary structure comprises 546 residues: EH domain-containing protein 2 (546 aa).

EF-hand domains are found at residues 15–50 and 51–84; these read EHQK…SKLS and RQEL…VSLA. The region spanning 16–94 is the EH domain; sequence HQKIYKEWFN…QEGHEITSDL (79 aa). Positions 28, 30, 32, 34, 39, 62, and 73 each coordinate Ca(2+). Residues 194–430 form the Dynamin-type G domain; sequence FDAKPMVMLL…LLADLMDVPK (237 aa). Residues 204-211 form a G1 motif region; that stretch reads GQYSTGKT. 204–211 is a binding site for GTP; it reads GQYSTGKT. The interval 230 to 231 is G2 motif; sequence EP. Positions 292 to 295 are G3 motif; that stretch reads DTPG. GTP contacts are provided by residues 292–296 and Lys359; that span reads DTPGV. Positions 358–361 are G4 motif; sequence NKAD. Position 382 (Val382) is a region of interest, G5 motif. Position 395 to 398 (395 to 398) interacts with GTP; sequence SFND. The Nuclear localization signal motif lies at 429 to 436; that stretch reads PKKACDRK. Positions 467 to 490 form a coiled coil; sequence KSKAQQRLMDNLEEEFGKVQREFH.

It belongs to the TRAFAC class dynamin-like GTPase superfamily. Dynamin/Fzo/YdjA family. EHD subfamily. Homooligomer, and heterooligomer with EHD1. Interacts with AP-4 complex subunit sigma (At2g19790).

It is found in the endosome membrane. The protein localises to the cell membrane. It localises to the nucleus. Its subcellular location is the cytoplasm. The catalysed reaction is GTP + H2O = GDP + phosphate + H(+). Functionally, involved in endocytosis negative regulation, probably by influencing actin organization. Acts in early endocytic membrane fusion and membrane trafficking of recycling endosomes. Exhibits an inhibitory effect on endocytosis when over-expressed. This chain is EH domain-containing protein 2, found in Arabidopsis thaliana (Mouse-ear cress).